Consider the following 269-residue polypeptide: Formamidopyrimidine-DNA glycosylase (269 aa).

Pro-2 (schiff-base intermediate with DNA) is an active-site residue. Glu-3 functions as the Proton donor in the catalytic mechanism. Lys-57 (proton donor; for beta-elimination activity) is an active-site residue. Residues His-90, Arg-109, and Arg-150 each coordinate DNA. An FPG-type zinc finger spans residues 235–269; the sequence is QVYGKAGEQCPNCAELIQELKIGQRNTFYCSSCQV. Arg-259 functions as the Proton donor; for delta-elimination activity in the catalytic mechanism.

Belongs to the FPG family. In terms of assembly, monomer. Requires Zn(2+) as cofactor.

It catalyses the reaction Hydrolysis of DNA containing ring-opened 7-methylguanine residues, releasing 2,6-diamino-4-hydroxy-5-(N-methyl)formamidopyrimidine.. It carries out the reaction 2'-deoxyribonucleotide-(2'-deoxyribose 5'-phosphate)-2'-deoxyribonucleotide-DNA = a 3'-end 2'-deoxyribonucleotide-(2,3-dehydro-2,3-deoxyribose 5'-phosphate)-DNA + a 5'-end 5'-phospho-2'-deoxyribonucleoside-DNA + H(+). Functionally, involved in base excision repair of DNA damaged by oxidation or by mutagenic agents. Acts as a DNA glycosylase that recognizes and removes damaged bases. Has a preference for oxidized purines, such as 7,8-dihydro-8-oxoguanine (8-oxoG). Has AP (apurinic/apyrimidinic) lyase activity and introduces nicks in the DNA strand. Cleaves the DNA backbone by beta-delta elimination to generate a single-strand break at the site of the removed base with both 3'- and 5'-phosphates. In Vibrio atlanticus (strain LGP32) (Vibrio splendidus (strain Mel32)), this protein is Formamidopyrimidine-DNA glycosylase.